The sequence spans 537 residues: Light-independent protochlorophyllide reductase subunit B (537 aa).

A [4Fe-4S] cluster-binding site is contributed by Asp-36. Catalysis depends on Asp-292, which acts as the Proton donor. Residue Gly-428–Leu-429 coordinates substrate. The interval Thr-459 to Gly-483 is disordered.

This sequence belongs to the ChlB/BchB/BchZ family. Protochlorophyllide reductase is composed of three subunits; BchL, BchN and BchB. Forms a heterotetramer of two BchB and two BchN subunits. [4Fe-4S] cluster is required as a cofactor.

It catalyses the reaction chlorophyllide a + oxidized 2[4Fe-4S]-[ferredoxin] + 2 ADP + 2 phosphate = protochlorophyllide a + reduced 2[4Fe-4S]-[ferredoxin] + 2 ATP + 2 H2O. Its pathway is porphyrin-containing compound metabolism; bacteriochlorophyll biosynthesis (light-independent). In terms of biological role, component of the dark-operative protochlorophyllide reductase (DPOR) that uses Mg-ATP and reduced ferredoxin to reduce ring D of protochlorophyllide (Pchlide) to form chlorophyllide a (Chlide). This reaction is light-independent. The NB-protein (BchN-BchB) is the catalytic component of the complex. This chain is Light-independent protochlorophyllide reductase subunit B, found in Chloroherpeton thalassium (strain ATCC 35110 / GB-78).